A 1478-amino-acid chain; its full sequence is MVSSGCRMRSLWFIIIISFLPNTEGFSRAALPFGLVRRELSCEGYSIDLRCPGSDVIMIESANYGRTDDKICDADPFQMENTDCYLPDAFKIMTQRCNNRTQCIVVTGSDVFPDPCPGTYKYLEVQYECVPYMEQKVFVCPGTLKAIVDSPCIYEAEQKAGAWCKDPLQAADKIYFMPWTPYRTDTLIEYASLEDFQNSRQTTTYKLPNRVDGTGFVVYDGAVFFNKERTRNIVKYDLRTRIKSGEAIINYANYHDTSPYRWGGKTDIDLAVDENGLWVIYATEQNNGMIVISQLNPYTLRFEATWETVYDKRAASNAFMICGVLYVVRSVYQDNESETGKNAIDYIYNTRLNRGEYVDVPFPNQYQYIAAVDYNPRDNQLYVWNNNFILRYSLEFGPPDPAQVPTTAVTITSSAEMFKTTVSTTSTTSQKGPMSTTVAGSQEGSKGTKAPPAVSTTKIPPVTNIFPLPERFCEALDARGIRWPQTQRGMMVERPCPKGTRGTASYLCVLSTGTWNPKGPDLSNCTSHWVNQLAQKIRSGENAASLANELAKHTKGPVFAGDVSSSVRLMEQLVDILDAQLQELKPSEKDSAGRSYNKLQKREKTCRAYLKAIVDTVDNLLRPEALESWKHMNSSEQAHTATMLLDTLEEGAFVLADNLVEPTRVSMPTENIVLEVAVLSTEGQVQDFKFPLGIKGAGSSIQLSANTVKQNSRNGLAKLVFIIYRSLGQFLSTENATIKLGADFIGRNSTIAVNSHVISVSINKESSRVYLTDPVLFTLPHIDPDNYFNANCSFWNYSERTMMGYWSTQGCKLVDTNKTRTTCACSHLTNFAILMAHREIAYKDGVHELLLTVITWVGIVISLVCLAICIFTFCFFRGLQSDRNTIHKNLCINLFIAEFIFLIGIDKTKYMIACPIFAGLLHFFFLAAFAWMCLEGVQLYLMLVEVFESEYSRKKYYYVAGYLFPATVVGVSAAIDYKSYGTEKACWLHVDNYFIWSFIGPVTFIILLNIIFLVITLCKMVKHSNTLKPDSSRLENINNYRVCDGYYNTDLPGSWVLGAFALLCLLGLTWSFGLLFINEETIVMAYLFTIFNAFQGVFIFIFHCALQKKVRKEYGKCFRHSYCCGGLPTESPHSSVKASTTRTSARYSSGTQSRIRRMWNDTVRKQSESSFISGDINSTSTLNQGMTGNYLLTNPLLRPHGTNNPYNTLLAETVVCNAPSAPVFNSPGHSLNNARDTSAMDTLPLNGNFNNSYSLRKGDYNDSVQVVDCGLSLNDTAFEKMIISELVHNNLRGSSKAHNLELTLPVKPVIGGSSSEDDAIVADASSLMHGDNPGLELHHKELEAPLIPQRTHSLLYQPQKKAKPEGTDSYVSQLTAEAEDHLQSPNRDSLYTSMPNLRDSPYQESSPDMEEDLSPSRRSENEDIYYKSMPNLGAGHQLQMCYQISRGNSDGYIIPINKEGCIPEGDVREGQMQLVTSL.

Positions 1–25 are cleaved as a signal peptide; the sequence is MVSSGCRMRSLWFIIIISFLPNTEG. Residues 26–855 lie on the Extracellular side of the membrane; the sequence is FSRAALPFGL…VHELLLTVIT (830 aa). Positions 41 to 130 constitute an SUEL-type lectin domain; sequence SCEGYSIDLR…KYLEVQYECV (90 aa). N-linked (GlcNAc...) asparagine glycosylation is present at Asn99. Residues 139 to 398 form the Olfactomedin-like domain; the sequence is VCPGTLKAIV…ILRYSLEFGP (260 aa). Cys140 and Cys322 are oxidised to a cystine. A glycan (N-linked (GlcNAc...) asparagine) is linked at Asn335. A disordered region spans residues 422 to 458; the sequence is VSTTSTTSQKGPMSTTVAGSQEGSKGTKAPPAVSTTK. The span at 430–445 shows a compositional bias: polar residues; that stretch reads QKGPMSTTVAGSQEGS. Asn524, Asn633, Asn735, Asn748, Asn791, Asn796, and Asn817 each carry an N-linked (GlcNAc...) asparagine glycan. Residues 663–841 enclose the GAIN-B domain; it reads TRVSMPTENI…AILMAHREIA (179 aa). 2 disulfides stabilise this stretch: Cys792–Cys823 and Cys811–Cys825. The tract at residues 792-841 is GPS; the sequence is CSFWNYSERTMMGYWSTQGCKLVDTNKTRTTCACSHLTNFAILMAHREIA. Residues 856–876 form a helical membrane-spanning segment; that stretch reads WVGIVISLVCLAICIFTFCFF. Over 877–884 the chain is Cytoplasmic; that stretch reads RGLQSDRN. The chain crosses the membrane as a helical span at residues 885 to 905; the sequence is TIHKNLCINLFIAEFIFLIGI. Topologically, residues 906–911 are extracellular; sequence DKTKYM. The chain crosses the membrane as a helical span at residues 912–932; sequence IACPIFAGLLHFFFLAAFAWM. Topologically, residues 933–955 are cytoplasmic; sequence CLEGVQLYLMLVEVFESEYSRKK. The chain crosses the membrane as a helical span at residues 956–976; sequence YYYVAGYLFPATVVGVSAAID. Residues 977-994 lie on the Extracellular side of the membrane; the sequence is YKSYGTEKACWLHVDNYF. A helical membrane pass occupies residues 995–1015; it reads IWSFIGPVTFIILLNIIFLVI. The Cytoplasmic portion of the chain corresponds to 1016–1056; sequence TLCKMVKHSNTLKPDSSRLENINNYRVCDGYYNTDLPGSWV. Residues 1057-1077 form a helical membrane-spanning segment; it reads LGAFALLCLLGLTWSFGLLFI. Residues 1078-1081 lie on the Extracellular side of the membrane; that stretch reads NEET. A helical transmembrane segment spans residues 1082 to 1102; the sequence is IVMAYLFTIFNAFQGVFIFIF. Over 1103 to 1478 the chain is Cytoplasmic; that stretch reads HCALQKKVRK…EGQMQLVTSL (376 aa). The tract at residues 1378–1419 is disordered; sequence AEDHLQSPNRDSLYTSMPNLRDSPYQESSPDMEEDLSPSRRS. Residues 1383 to 1395 show a composition bias toward polar residues; it reads QSPNRDSLYTSMP. Phosphoserine occurs at positions 1393, 1428, and 1449.

It belongs to the G-protein coupled receptor 2 family. Adhesion G-protein coupled receptor (ADGR) subfamily. In terms of assembly, heterodimer of 2 chains generated by proteolytic processing; the large extracellular N-terminal fragment and the membrane-bound C-terminal fragment predominantly remain associated and non-covalently linked. Autoproteolytically processed at the GPS region of the GAIN-B domain; this cleavage modulates receptor activity. As to expression, ubiquitously expressed.

It is found in the postsynaptic cell membrane. With respect to regulation, forms a heterodimer of 2 chains generated by proteolytic processing that remain associated through non-covalent interactions mediated by the GAIN-B domain. In the inactivated receptor, the Stachel sequence (also named stalk) is embedded in the GAIN-B domain, where it adopts a beta-strand conformation. On activation, the Stachel moves into the 7 transmembrane region and adopts a twisted hook-shaped configuration that forms contacts within the receptor, leading to coupling of a G-alpha protein, which activates signaling. The cleaved GAIN-B and N-terminal domains can then dissociate from the rest of the receptor. In terms of biological role, orphan adhesion G-protein coupled receptor (aGPCR), which mediates synapse specificity. Ligand binding causes a conformation change that triggers signaling via guanine nucleotide-binding proteins (G proteins) and modulates the activity of downstream effectors. Following G-protein coupled receptor activation, associates with cell adhesion molecules that are expressed at the surface of adjacent cells to direct synapse specificity. Specifically mediates the establishment of perforant-path synapses on CA1-region pyramidal neurons in the hippocampus. Localizes to postsynaptic spines in excitatory synapses in the S.lacunosum-moleculare and interacts with presynaptic cell adhesion molecules, such as teneurins, promoting synapse formation. The sequence is that of Adhesion G protein-coupled receptor L2 (ADGRL2) from Bos taurus (Bovine).